The following is a 570-amino-acid chain: Molecular chaperone MKKS (570 aa).

192–199 (ERMVLGKS) contacts ATP. A substrate-binding apical domain region spans residues 198 to 370 (KSIIVPLKGQ…FHLLPNEATV (173 aa)).

It belongs to the TCP-1 chaperonin family. As to quaternary structure, component of a complex composed at least of MKKS, BBS10, BBS12, TCP1, CCT2, CCT3, CCT4, CCT5 and CCT8. Interacts with STUB1. Interacts with BBS2 (via coiled coil domain). Interacts with CCDC28B. Interacts with BBS12. Interacts with SMARCC1, a component of the SWI/SNF complexes; the interaction takes place predominantly in the cytoplasm and may modulate SMARCC1 location. Interacts with DLEC1. As to expression, widely expressed in adult and fetal tissues. Expressed in the developing heart, brain retina, limb buds, as well as in the developing neural tube. Expressed in the embryo in the first and second branchial arches. Expressed in parafin embedded tissue sections of brain, kidney, retina, olfactory epithelium and the ependymal layer of ventricles. Detected only in restricted regions of these tissue sections, including the ciliated border of renal tubules, the connecting cilium and the inner and outer nuclear layers of retina, and the ciliated layer of olfactory epithelia.

Its subcellular location is the cytoplasm. It localises to the cytoskeleton. The protein localises to the microtubule organizing center. It is found in the centrosome. The protein resides in the cytosol. Its subcellular location is the nucleus. Probable molecular chaperone that assists the folding of proteins upon ATP hydrolysis. Plays a role in the assembly of BBSome, a complex involved in ciliogenesis regulating transports vesicles to the cilia. May play a role in protein processing in limb, cardiac and reproductive system development. May play a role in cytokinesis. The protein is Molecular chaperone MKKS (Mkks) of Mus musculus (Mouse).